Consider the following 565-residue polypeptide: Zinc finger protein 143 (565 aa).

7 C2H2-type zinc fingers span residues F230 to H254, Y260 to H284, Y290 to H314, F320 to H344, Y350 to H374, Y380 to H404, and Y410 to H433.

This sequence belongs to the GLI C2H2-type zinc-finger protein family.

The protein localises to the nucleus. Transcriptional activator. Activates the gene for selenocysteine tRNA (tRNAsec). Binds to the activator element (AE) motif of the selenocysteine tRNA gene promoter. This is Zinc finger protein 143 (znf143) from Xenopus laevis (African clawed frog).